A 305-amino-acid chain; its full sequence is Dihydroorotate dehydrogenase B (NAD(+)), catalytic subunit (305 aa).

Residues S23 and 47 to 48 (KG) each bind FMN. Substrate-binding positions include K47 and 71-75 (NAIGL). N101 and N129 together coordinate FMN. Residue N129 coordinates substrate. Catalysis depends on C132, which acts as the Nucleophile. Positions 167 and 193 each coordinate FMN. Substrate is bound at residue 194-195 (NT). FMN is bound by residues G219, 245-246 (GG), and 267-268 (GT).

The protein belongs to the dihydroorotate dehydrogenase family. Type 1 subfamily. Heterotetramer of 2 PyrK and 2 PyrD type B subunits. The cofactor is FMN.

It is found in the cytoplasm. The enzyme catalyses (S)-dihydroorotate + NAD(+) = orotate + NADH + H(+). Its pathway is pyrimidine metabolism; UMP biosynthesis via de novo pathway; orotate from (S)-dihydroorotate (NAD(+) route): step 1/1. Its function is as follows. Catalyzes the conversion of dihydroorotate to orotate with NAD(+) as electron acceptor. The polypeptide is Dihydroorotate dehydrogenase B (NAD(+)), catalytic subunit (pyrD) (Geobacter metallireducens (strain ATCC 53774 / DSM 7210 / GS-15)).